Here is a 262-residue protein sequence, read N- to C-terminus: Acetylglutamate kinase (262 aa).

Substrate contacts are provided by residues G48–G49, R70, and N162.

It belongs to the acetylglutamate kinase family. ArgB subfamily.

It is found in the cytoplasm. The catalysed reaction is N-acetyl-L-glutamate + ATP = N-acetyl-L-glutamyl 5-phosphate + ADP. Its pathway is amino-acid biosynthesis; L-arginine biosynthesis; N(2)-acetyl-L-ornithine from L-glutamate: step 2/4. Catalyzes the ATP-dependent phosphorylation of N-acetyl-L-glutamate. The protein is Acetylglutamate kinase of Vibrio cholerae serotype O1 (strain ATCC 39541 / Classical Ogawa 395 / O395).